Reading from the N-terminus, the 1196-residue chain is Cingulin (1196 aa).

The tract at residues 7–354 (MAEPRGPVDH…LVMTSGSAKG (348 aa)) is head. Residues 48 to 62 (ANTYGVAVRVQGIAG) carry the ZIM motif. The segment at 54–67 (AVRVQGIAGQPFVV) is interaction with TJP1/ZO1. A disordered region spans residues 82–105 (IKGTNNRGPPGALSSDSELPESTY). Phosphoserine is present on residues S95, S96, S98, S135, S137, S140, S155, S165, and S214. The span at 95–105 (SSDSELPESTY) shows a compositional bias: polar residues. The interval 183 to 263 (NKFDSRQGGQ…NQGPLGGFSC (81 aa)) is disordered. A compositionally biased stretch (basic and acidic residues) spans 218–231 (RLPRDTLDEREHQF). The span at 245–256 (MGNSKQSSQNQG) shows a compositional bias: polar residues. Residue S274 is modified to Phosphoserine. Residues 355–1150 (LTGQSELSQK…ARIKTLEKDS (796 aa)) adopt a coiled-coil conformation. At K576 the chain carries N6-acetyllysine. Over residues 884–897 (AQRQAKEWATEAEK) the composition is skewed to basic and acidic residues. Disordered stretches follow at residues 884–906 (AQRQ…SRLQ), 1023–1061 (DLKS…EERE), and 1149–1174 (DSWR…EEFD). Residues 1038 to 1050 (SASLSQLESQNQE) are compositionally biased toward low complexity. Residues 1051 to 1061 (LQERLQAEERE) show a composition bias toward basic and acidic residues. Positions 1155–1196 (SRSAAESAQREGLSSDEEFDSVYDPSSIASLLTESNLQTSSC) are tail. Phosphoserine occurs at positions 1168, 1169, and 1175.

Belongs to the cingulin family. As to quaternary structure, homodimer. Interacts with TJP1/ZO1 and SPEF1.

The protein resides in the cell junction. Its subcellular location is the tight junction. Probably plays a role in the formation and regulation of the tight junction (TJ) paracellular permeability barrier. This is Cingulin from Canis lupus familiaris (Dog).